We begin with the raw amino-acid sequence, 412 residues long: Polyferredoxin protein MvhB (412 aa).

12 consecutive 4Fe-4S ferredoxin-type domains span residues 1–29 (MIVVNKEDCIRCGACQGTCPTAAIEVTPE), 30–57 (DVIYCDICGGEPKCVDACPTGALKIEDL), 67–96 (GRIVFNPDKCNECGDCVEVCPPQILKLDEG), 97–127 (KVKKIPLQGFCVMCQKCVDICPVGVIGVEGI), 138–166 (EGPIFIADCVGCGMCVPECPVDAITLEKV), 168–197 (GVIEIDEDTCIKCGVCAQTCPWNAVYISGK), 207–236 (RKFELDEEACIGCNTCVEACPGDFIVPKSS), 238–266 (LTVELPAICTACGLCEQLCPVDAIDLDVE), 276–305 (EGLVWDEGKCDFIGACANICPNDAIRVVTR), 314–345 (EKVDEEPSFAMCTRCGACTMACPKGALSLVDM), 357–386 (KRVQYNPALCDQCGDCIEACPYDMLKLTDE), and 385–412 (DEKVPLKGFCILCDQCIPACPKGALSLK). [4Fe-4S] cluster contacts are provided by cysteine 9, cysteine 12, cysteine 15, and cysteine 19. Residues cysteine 76, cysteine 79, cysteine 82, cysteine 86, cysteine 107, cysteine 110, cysteine 113, cysteine 117, cysteine 146, cysteine 149, cysteine 152, cysteine 156, cysteine 177, cysteine 180, cysteine 183, cysteine 187, cysteine 216, cysteine 219, cysteine 222, cysteine 226, cysteine 246, cysteine 249, cysteine 252, and cysteine 256 each coordinate [4Fe-4S] cluster. Positions 325, 328, 331, 335, 366, 369, 372, 376, 394, 397, 400, and 404 each coordinate [4Fe-4S] cluster.

It depends on [4Fe-4S] cluster as a cofactor.

This Methanothermobacter marburgensis (strain ATCC BAA-927 / DSM 2133 / JCM 14651 / NBRC 100331 / OCM 82 / Marburg) (Methanobacterium thermoautotrophicum) protein is Polyferredoxin protein MvhB (mvhB).